The sequence spans 247 residues: Sugar fermentation stimulation protein homolog (247 aa).

The protein belongs to the SfsA family.

The polypeptide is Sugar fermentation stimulation protein homolog (Methylorubrum populi (strain ATCC BAA-705 / NCIMB 13946 / BJ001) (Methylobacterium populi)).